Here is a 1031-residue protein sequence, read N- to C-terminus: Error-prone DNA polymerase (1031 aa).

It belongs to the DNA polymerase type-C family. DnaE2 subfamily.

Its subcellular location is the cytoplasm. It carries out the reaction DNA(n) + a 2'-deoxyribonucleoside 5'-triphosphate = DNA(n+1) + diphosphate. Functionally, DNA polymerase involved in damage-induced mutagenesis and translesion synthesis (TLS). It is not the major replicative DNA polymerase. The polypeptide is Error-prone DNA polymerase (Pseudomonas syringae pv. tomato (strain ATCC BAA-871 / DC3000)).